A 117-amino-acid polypeptide reads, in one-letter code: Large ribosomal subunit protein uL18 (117 aa).

The protein belongs to the universal ribosomal protein uL18 family. In terms of assembly, part of the 50S ribosomal subunit; part of the 5S rRNA/L5/L18/L25 subcomplex. Contacts the 5S and 23S rRNAs.

Functionally, this is one of the proteins that bind and probably mediate the attachment of the 5S RNA into the large ribosomal subunit, where it forms part of the central protuberance. This chain is Large ribosomal subunit protein uL18, found in Pseudoalteromonas atlantica (strain T6c / ATCC BAA-1087).